Here is a 297-residue protein sequence, read N- to C-terminus: Acetylglutamate kinase (297 aa).

Residues 73 to 74 (GG), Arg95, and Asn188 each bind substrate.

It belongs to the acetylglutamate kinase family. ArgB subfamily.

It localises to the cytoplasm. It catalyses the reaction N-acetyl-L-glutamate + ATP = N-acetyl-L-glutamyl 5-phosphate + ADP. The protein operates within amino-acid biosynthesis; L-arginine biosynthesis; N(2)-acetyl-L-ornithine from L-glutamate: step 2/4. Its function is as follows. Catalyzes the ATP-dependent phosphorylation of N-acetyl-L-glutamate. The chain is Acetylglutamate kinase from Trichormus variabilis (strain ATCC 29413 / PCC 7937) (Anabaena variabilis).